The chain runs to 26 residues: GLLQTIKEKLESLESLAKGIVSGIQA.

Position 26 is an alanine amide (A26).

Expressed by the skin dorsal glands.

The protein resides in the secreted. Functionally, shows antibacterial activity against S.uberis. This Ranoidea genimaculata (Brown-spotted tree frog) protein is Maculatin-3.1.